Consider the following 138-residue polypeptide: Glutathione S-transferase Mu 5 (138 aa).

Position 1 is a phosphoserine (Ser-1). The 71-residue stretch at 1–71 folds into the GST N-terminal domain; the sequence is SMVLGYWDIR…KITQSNAILR (71 aa). Glutathione-binding positions include 6–7, 39–43, 52–53, and 65–66; these read YW, WLDVK, NL, and QS. Positions 72–135 constitute a GST C-terminal domain; sequence IRVDIMENQI…FMCRCFKMPI (64 aa).

It belongs to the GST superfamily. Mu family. Homodimer.

Its subcellular location is the cytoplasm. It carries out the reaction RX + glutathione = an S-substituted glutathione + a halide anion + H(+). Functionally, conjugation of reduced glutathione to a wide number of exogenous and endogenous hydrophobic electrophiles. The sequence is that of Glutathione S-transferase Mu 5 from Mesocricetus auratus (Golden hamster).